A 157-amino-acid polypeptide reads, in one-letter code: 2-C-methyl-D-erythritol 2,4-cyclodiphosphate synthase (157 aa).

The a divalent metal cation site is built by Asp8 and His10. Residues 8–10 and 35–36 each bind 4-CDP-2-C-methyl-D-erythritol 2-phosphate; these read DIH and HS. His43 serves as a coordination point for a divalent metal cation. 4-CDP-2-C-methyl-D-erythritol 2-phosphate is bound by residues 57–59, 62–66, and Lys142; these read DIG and FPNND.

The protein belongs to the IspF family. As to quaternary structure, homotrimer. A divalent metal cation is required as a cofactor.

It catalyses the reaction 4-CDP-2-C-methyl-D-erythritol 2-phosphate = 2-C-methyl-D-erythritol 2,4-cyclic diphosphate + CMP. The protein operates within isoprenoid biosynthesis; isopentenyl diphosphate biosynthesis via DXP pathway; isopentenyl diphosphate from 1-deoxy-D-xylulose 5-phosphate: step 4/6. Functionally, involved in the biosynthesis of isopentenyl diphosphate (IPP) and dimethylallyl diphosphate (DMAPP), two major building blocks of isoprenoid compounds. Catalyzes the conversion of 4-diphosphocytidyl-2-C-methyl-D-erythritol 2-phosphate (CDP-ME2P) to 2-C-methyl-D-erythritol 2,4-cyclodiphosphate (ME-CPP) with a corresponding release of cytidine 5-monophosphate (CMP). This Wigglesworthia glossinidia brevipalpis protein is 2-C-methyl-D-erythritol 2,4-cyclodiphosphate synthase.